Reading from the N-terminus, the 226-residue chain is Purine nucleoside phosphorylase Cj1217c (226 aa).

Residues His-58, Cys-93, and His-109 each contribute to the Zn(2+) site.

It belongs to the purine nucleoside phosphorylase YfiH/LACC1 family. In terms of assembly, homodimer. It depends on Cu(2+) as a cofactor. Requires Zn(2+) as cofactor.

It carries out the reaction adenosine + phosphate = alpha-D-ribose 1-phosphate + adenine. The enzyme catalyses S-methyl-5'-thioadenosine + phosphate = 5-(methylsulfanyl)-alpha-D-ribose 1-phosphate + adenine. It catalyses the reaction inosine + phosphate = alpha-D-ribose 1-phosphate + hypoxanthine. The catalysed reaction is adenosine + H2O + H(+) = inosine + NH4(+). Its function is as follows. Purine nucleoside enzyme that catalyzes the phosphorolysis of adenosine and inosine nucleosides, yielding D-ribose 1-phosphate and the respective free bases, adenine and hypoxanthine. Also catalyzes the phosphorolysis of S-methyl-5'-thioadenosine into adenine and S-methyl-5-thio-alpha-D-ribose 1-phosphate. Also has adenosine deaminase activity. The chain is Purine nucleoside phosphorylase Cj1217c from Campylobacter jejuni subsp. jejuni serotype O:2 (strain ATCC 700819 / NCTC 11168).